Here is a 275-residue protein sequence, read N- to C-terminus: Large ribosomal subunit protein uL2 (275 aa).

Disordered stretches follow at residues 36-55 (GLTG…RRMG) and 224-263 (VVMN…RQNK).

It belongs to the universal ribosomal protein uL2 family. In terms of assembly, part of the 50S ribosomal subunit. Forms a bridge to the 30S subunit in the 70S ribosome.

Functionally, one of the primary rRNA binding proteins. Required for association of the 30S and 50S subunits to form the 70S ribosome, for tRNA binding and peptide bond formation. It has been suggested to have peptidyltransferase activity; this is somewhat controversial. Makes several contacts with the 16S rRNA in the 70S ribosome. The sequence is that of Large ribosomal subunit protein uL2 from Rhodospirillum centenum (strain ATCC 51521 / SW).